Reading from the N-terminus, the 858-residue chain is Leucine--tRNA ligase (858 aa).

A 'HIGH' region motif is present at residues 53-63 (PYPSGNLHMGH). The 'KMSKS' region signature appears at 622–626 (KMSKS). An ATP-binding site is contributed by Lys-625.

This sequence belongs to the class-I aminoacyl-tRNA synthetase family.

The protein localises to the cytoplasm. It carries out the reaction tRNA(Leu) + L-leucine + ATP = L-leucyl-tRNA(Leu) + AMP + diphosphate. The polypeptide is Leucine--tRNA ligase (Prochlorococcus marinus subsp. pastoris (strain CCMP1986 / NIES-2087 / MED4)).